Here is a 183-residue protein sequence, read N- to C-terminus: Oligoribonuclease (183 aa).

Residues 8–171 (LIWIDLEMTG…DDIRDSIHEL (164 aa)) enclose the Exonuclease domain. Residue tyrosine 129 is part of the active site.

It belongs to the oligoribonuclease family.

It is found in the cytoplasm. Functionally, 3'-to-5' exoribonuclease specific for small oligoribonucleotides. The sequence is that of Oligoribonuclease from Halorhodospira halophila (strain DSM 244 / SL1) (Ectothiorhodospira halophila (strain DSM 244 / SL1)).